The sequence spans 235 residues: Cobalt transport protein CbiM (235 aa).

A run of 6 helical transmembrane segments spans residues 6 to 26 (GVLP…FVVH), 43 to 63 (LLLA…LPSV), 85 to 105 (MAFM…HGGI), 108 to 128 (LGAN…GAYV), 133 to 153 (LGGP…LSTY), and 181 to 201 (IFAI…ILLF).

It belongs to the CbiM family. As to quaternary structure, forms an energy-coupling factor (ECF) transporter complex composed of an ATP-binding protein (A component, CbiO), a transmembrane protein (T component, CbiQ) and 2 possible substrate-capture proteins (S components, CbiM and CbiN) of unknown stoichimetry.

It is found in the cell membrane. Its pathway is cofactor biosynthesis; adenosylcobalamin biosynthesis. Part of the energy-coupling factor (ECF) transporter complex CbiMNOQ involved in cobalt import. This is Cobalt transport protein CbiM from Propionibacterium freudenreichii subsp. shermanii (strain ATCC 9614 / DSM 4902 / CIP 103027 / NCIMB 8099 / CIRM-BIA1).